The sequence spans 896 residues: Protein bride of sevenless (896 aa).

The signal sequence occupies residues 1–31 (MKVMDALQSGRRKPLPVALLCILVTVFCVLE). Over 32–530 (CHGADLTSPT…MFWRIKMDTW (499 aa)) the chain is Extracellular. The tract at residues 38 to 84 (TSPTKKSAPLRITKPQPTSQQAKPISITTRAPTTVASTTDDEVSSSV) is disordered. Polar residues predominate over residues 52–64 (PQPTSQQAKPISI). A compositionally biased stretch (low complexity) spans 65–84 (TTRAPTTVASTTDDEVSSSV). Asparagine 183, asparagine 307, asparagine 474, and asparagine 485 each carry an N-linked (GlcNAc...) asparagine glycan. A run of 7 helical transmembrane segments spans residues 531–554 (VATGLTAAILGLIATLAILVFIVV), 570–588 (ILLLLSLILVFCSFVPYSI), 615–637 (VFIMTLVYCFVFSLLLCRAVMLA), 655–676 (AVICAFSVVAQVGMSVQLLVVM), 693–712 (WLWGLLAYDFALLCCVGALI), 728–748 (IVIGSVLIMVIWVAWIALSLF), and 759–781 (LGLQASGWAVLVGILIPRTFLIV). The Cytoplasmic portion of the chain corresponds to 782 to 896 (RGIERSDIAQ…SPDHNKITRF (115 aa)). Disordered stretches follow at residues 825–844 (SQDEVNHQSPSEIPTLPLRG) and 861–896 (ANINPQRPPPRPQQSPSRSSVSSLPPSPDHNKITRF). The segment covering 874 to 884 (QSPSRSSVSSL) has biased composition (low complexity).

This sequence belongs to the G-protein coupled receptor 3 family. Expressed exclusively by R8 photoreceptor cells and is internalized in a sev-dependent manner by R7 cells.

It is found in the cell membrane. In terms of biological role, acts as a ligand for sevenless tyrosine-kinase receptor during eye development. This Drosophila melanogaster (Fruit fly) protein is Protein bride of sevenless (boss).